The chain runs to 777 residues: Homoaconitase, mitochondrial (777 aa).

The N-terminal 35 residues, 1 to 35 (MFKRTGSLLLRCRASRVPVIGRPLISLSTSSTSLS), are a transit peptide targeting the mitochondrion. The interval 47–74 (LRRYTEASSSTTQTSPSSSSWPAPDAAP) is disordered. A compositionally biased stretch (low complexity) spans 52–74 (EASSSTTQTSPSSSSWPAPDAAP). 3 residues coordinate [4Fe-4S] cluster: Cys398, Cys466, and Cys469.

It belongs to the aconitase/IPM isomerase family. Requires [4Fe-4S] cluster as cofactor.

Its subcellular location is the mitochondrion. The enzyme catalyses (2R,3S)-homoisocitrate = cis-homoaconitate + H2O. It functions in the pathway amino-acid biosynthesis; L-lysine biosynthesis via AAA pathway; L-alpha-aminoadipate from 2-oxoglutarate: step 3/5. Its function is as follows. Catalyzes the reversible hydration of cis-homoaconitate to (2R,3S)-homoisocitrate, a step in the alpha-aminoadipate pathway for lysine biosynthesis. The sequence is that of Homoaconitase, mitochondrial (lys4) from Aspergillus fumigatus (strain ATCC MYA-4609 / CBS 101355 / FGSC A1100 / Af293) (Neosartorya fumigata).